The following is a 689-amino-acid chain: Glycine--tRNA ligase beta subunit (689 aa).

Belongs to the class-II aminoacyl-tRNA synthetase family. Tetramer of two alpha and two beta subunits.

The protein resides in the cytoplasm. The enzyme catalyses tRNA(Gly) + glycine + ATP = glycyl-tRNA(Gly) + AMP + diphosphate. This is Glycine--tRNA ligase beta subunit from Shigella flexneri serotype 5b (strain 8401).